Reading from the N-terminus, the 325-residue chain is 4-hydroxy-3-methylbut-2-enyl diphosphate reductase (325 aa).

Position 13 (Cys-13) interacts with [4Fe-4S] cluster. (2E)-4-hydroxy-3-methylbut-2-enyl diphosphate contacts are provided by His-42 and His-76. The dimethylallyl diphosphate site is built by His-42 and His-76. Residues His-42 and His-76 each coordinate isopentenyl diphosphate. A [4Fe-4S] cluster-binding site is contributed by Cys-98. (2E)-4-hydroxy-3-methylbut-2-enyl diphosphate is bound at residue His-126. His-126 is a dimethylallyl diphosphate binding site. His-126 contributes to the isopentenyl diphosphate binding site. The Proton donor role is filled by Glu-128. Thr-169 lines the (2E)-4-hydroxy-3-methylbut-2-enyl diphosphate pocket. Position 230 (Cys-230) interacts with [4Fe-4S] cluster. Positions 258, 259, 260, and 306 each coordinate (2E)-4-hydroxy-3-methylbut-2-enyl diphosphate. 4 residues coordinate dimethylallyl diphosphate: Ser-258, Ser-259, Asn-260, and Ser-306. Isopentenyl diphosphate-binding residues include Ser-258, Ser-259, Asn-260, and Ser-306.

The protein belongs to the IspH family. It depends on [4Fe-4S] cluster as a cofactor.

The catalysed reaction is isopentenyl diphosphate + 2 oxidized [2Fe-2S]-[ferredoxin] + H2O = (2E)-4-hydroxy-3-methylbut-2-enyl diphosphate + 2 reduced [2Fe-2S]-[ferredoxin] + 2 H(+). It catalyses the reaction dimethylallyl diphosphate + 2 oxidized [2Fe-2S]-[ferredoxin] + H2O = (2E)-4-hydroxy-3-methylbut-2-enyl diphosphate + 2 reduced [2Fe-2S]-[ferredoxin] + 2 H(+). Its pathway is isoprenoid biosynthesis; dimethylallyl diphosphate biosynthesis; dimethylallyl diphosphate from (2E)-4-hydroxy-3-methylbutenyl diphosphate: step 1/1. It functions in the pathway isoprenoid biosynthesis; isopentenyl diphosphate biosynthesis via DXP pathway; isopentenyl diphosphate from 1-deoxy-D-xylulose 5-phosphate: step 6/6. Functionally, catalyzes the conversion of 1-hydroxy-2-methyl-2-(E)-butenyl 4-diphosphate (HMBPP) into a mixture of isopentenyl diphosphate (IPP) and dimethylallyl diphosphate (DMAPP). Acts in the terminal step of the DOXP/MEP pathway for isoprenoid precursor biosynthesis. The protein is 4-hydroxy-3-methylbut-2-enyl diphosphate reductase of Chlorobium phaeobacteroides (strain BS1).